The sequence spans 508 residues: BICD family-like cargo adapter 2 (508 aa).

A compositionally biased stretch (low complexity) spans 1–22; it reads MSSPDGPSFPSGPLSGGASPSG. Disordered stretches follow at residues 1–27, 132–152, and 300–351; these read MSSP…EGFF, LGEQ…ALSE, and AHSL…TSLS. Coiled-coil stretches lie at residues 64–300 and 353–458; these read AAEL…SELA and AEIL…DMQV. Residues 135 to 149 show a composition bias toward basic and acidic residues; sequence QRSEQQDSGRERARA. A disordered region spans residues 470-491; it reads KELSASASSSTPRRAAPRFSLR. Residues 473–489 show a composition bias toward low complexity; sequence SASASSSTPRRAAPRFS.

It belongs to the BICDR family. In terms of assembly, interacts with RAB13.

The sequence is that of BICD family-like cargo adapter 2 (BICDL2) from Homo sapiens (Human).